Here is a 94-residue protein sequence, read N- to C-terminus: Co-chaperonin GroES (94 aa).

The protein belongs to the GroES chaperonin family. Heptamer of 7 subunits arranged in a ring. Interacts with the chaperonin GroEL.

The protein resides in the cytoplasm. In terms of biological role, together with the chaperonin GroEL, plays an essential role in assisting protein folding. The GroEL-GroES system forms a nano-cage that allows encapsulation of the non-native substrate proteins and provides a physical environment optimized to promote and accelerate protein folding. GroES binds to the apical surface of the GroEL ring, thereby capping the opening of the GroEL channel. The protein is Co-chaperonin GroES of Staphylococcus carnosus (strain TM300).